The primary structure comprises 586 residues: Putative butyrophilin subfamily 2 member A3 (586 aa).

The N-terminal stretch at 1–27 (MEPAAALHFSRPASLLLLLSLCALVSA) is a signal peptide. The Ig-like V-type domain maps to 28-139 (QVTVVGPTDP…SCNEAILHLV (112 aa)). Topologically, residues 28–246 (QVTVVGPTDP…SFMPSRSPCV (219 aa)) are extracellular. 4 N-linked (GlcNAc...) asparagine glycosylation sites follow: asparagine 45, asparagine 112, asparagine 214, and asparagine 220. Cysteine 50 and cysteine 123 are oxidised to a cystine. A helical membrane pass occupies residues 247–267 (VILPVIMIILMIPIAICIYWI). At 268–586 (NNLQKEKKDS…VPQLPARKKV (319 aa)) the chain is on the cytoplasmic side. Residues 281–474 (TFNLCLSLAG…ILICSAFTGA (194 aa)) enclose the B30.2/SPRY domain.

It belongs to the immunoglobulin superfamily. BTN/MOG family.

It localises to the membrane. This chain is Putative butyrophilin subfamily 2 member A3 (BTN2A3P), found in Homo sapiens (Human).